Reading from the N-terminus, the 180-residue chain is Large ribosomal subunit protein uL5 (180 aa).

It belongs to the universal ribosomal protein uL5 family. As to quaternary structure, part of the 50S ribosomal subunit; part of the 5S rRNA/L5/L18/L25 subcomplex. Contacts the 5S rRNA and the P site tRNA. Forms a bridge to the 30S subunit in the 70S ribosome.

Functionally, this is one of the proteins that bind and probably mediate the attachment of the 5S RNA into the large ribosomal subunit, where it forms part of the central protuberance. In the 70S ribosome it contacts protein S13 of the 30S subunit (bridge B1b), connecting the 2 subunits; this bridge is implicated in subunit movement. Contacts the P site tRNA; the 5S rRNA and some of its associated proteins might help stabilize positioning of ribosome-bound tRNAs. This is Large ribosomal subunit protein uL5 from Cupriavidus necator (strain ATCC 17699 / DSM 428 / KCTC 22496 / NCIMB 10442 / H16 / Stanier 337) (Ralstonia eutropha).